The following is a 192-amino-acid chain: DNA dC-&gt;dU-editing enzyme APOBEC-3Ca (192 aa).

In terms of domain architecture, CMP/dCMP-type deaminase spans 15 to 141 (IDPNTFRFHF…PNYQEGLCKL (127 aa)). A Zn(2+)-binding site is contributed by His69. Glu71 acts as the Proton donor in catalysis. The Zn(2+) site is built by Cys100 and Cys103.

Belongs to the cytidine and deoxycytidylate deaminase family. In terms of assembly, (Microbial infection) Interacts with feline foamy virus protein Bet. This interaction does not induce APOBEC3Ca degradation but prevents its dimerization and incorporation into the virion. Zn(2+) serves as cofactor.

It is found in the nucleus. The protein resides in the cytoplasm. The catalysed reaction is a 2'-deoxycytidine in single-stranded DNA + H2O + H(+) = a 2'-deoxyuridine in single-stranded DNA + NH4(+). Functionally, DNA deaminase (cytidine deaminase) which acts as an inhibitor of retrovirus replication and retrotransposon mobility via deaminase-dependent and -independent mechanisms. Selectively targets single-stranded DNA and does not deaminate double-stranded DNA or single- or double-stranded RNA. Does not reduce infectivity of foamy feline virus, feline immunodeficiency virus or feline leukemia virus. In Felis catus (Cat), this protein is DNA dC-&gt;dU-editing enzyme APOBEC-3Ca.